Reading from the N-terminus, the 204-residue chain is ATP-dependent Clp protease proteolytic subunit 1 (204 aa).

Ser-97 (nucleophile) is an active-site residue. His-122 is an active-site residue.

It belongs to the peptidase S14 family. As to quaternary structure, fourteen ClpP subunits assemble into 2 heptameric rings which stack back to back to give a disk-like structure with a central cavity, resembling the structure of eukaryotic proteasomes.

It is found in the cytoplasm. The catalysed reaction is Hydrolysis of proteins to small peptides in the presence of ATP and magnesium. alpha-casein is the usual test substrate. In the absence of ATP, only oligopeptides shorter than five residues are hydrolyzed (such as succinyl-Leu-Tyr-|-NHMec, and Leu-Tyr-Leu-|-Tyr-Trp, in which cleavage of the -Tyr-|-Leu- and -Tyr-|-Trp bonds also occurs).. Functionally, cleaves peptides in various proteins in a process that requires ATP hydrolysis. Has a chymotrypsin-like activity. Plays a major role in the degradation of misfolded proteins. This chain is ATP-dependent Clp protease proteolytic subunit 1, found in Nostoc sp. (strain PCC 7120 / SAG 25.82 / UTEX 2576).